The primary structure comprises 152 residues: Acidic phospholipase A2 57 (152 aa).

Residues methionine 1–serine 21 form the signal peptide. The propeptide occupies isoleucine 22–leucine 27. 7 disulfide bridges follow: cysteine 38/cysteine 104, cysteine 54/cysteine 151, cysteine 56/cysteine 72, cysteine 71/cysteine 132, cysteine 78/cysteine 125, cysteine 88/cysteine 118, and cysteine 111/cysteine 123. Ca(2+) is bound by residues tyrosine 55, glycine 57, and glycine 59. Residue histidine 75 is part of the active site. Residue aspartate 76 participates in Ca(2+) binding. The active site involves aspartate 126.

This sequence belongs to the phospholipase A2 family. Group I subfamily. D49 sub-subfamily. Requires Ca(2+) as cofactor. Expressed by the venom gland.

The protein resides in the secreted. It carries out the reaction a 1,2-diacyl-sn-glycero-3-phosphocholine + H2O = a 1-acyl-sn-glycero-3-phosphocholine + a fatty acid + H(+). Its function is as follows. PLA2 catalyzes the calcium-dependent hydrolysis of the 2-acyl groups in 3-sn-phosphoglycerides. The sequence is that of Acidic phospholipase A2 57 from Hydrophis hardwickii (Hardwick's spine-bellied seasnake).